Here is a 154-residue protein sequence, read N- to C-terminus: Protein-export protein SecB (154 aa).

Belongs to the SecB family. In terms of assembly, homotetramer, a dimer of dimers. One homotetramer interacts with 1 SecA dimer.

The protein localises to the cytoplasm. Its function is as follows. One of the proteins required for the normal export of preproteins out of the cell cytoplasm. It is a molecular chaperone that binds to a subset of precursor proteins, maintaining them in a translocation-competent state. It also specifically binds to its receptor SecA. In Blochmanniella pennsylvanica (strain BPEN), this protein is Protein-export protein SecB.